A 471-amino-acid polypeptide reads, in one-letter code: Tryptophanase (471 aa).

Residues Lys5, Lys115, and Lys156 each carry the N6-acetyllysine modification. Lys270 is modified (N6-(pyridoxal phosphate)lysine). Lys450 carries the N6-acetyllysine modification.

The protein belongs to the beta-eliminating lyase family. Homotetramer. It depends on pyridoxal 5'-phosphate as a cofactor.

The catalysed reaction is L-tryptophan + H2O = indole + pyruvate + NH4(+). It participates in amino-acid degradation; L-tryptophan degradation via pyruvate pathway; indole and pyruvate from L-tryptophan: step 1/1. The polypeptide is Tryptophanase (Escherichia coli (strain SMS-3-5 / SECEC)).